Here is a 343-residue protein sequence, read N- to C-terminus: Probable 4-hydroxy-tetrahydrodipicolinate reductase 1, chloroplastic (343 aa).

The transit peptide at 1-14 directs the protein to the chloroplast; that stretch reads MLASTFATHPAAAA. NAD(+) contacts are provided by residues 167–169 and 190–193; these read GTT and SPQM. The Proton donor/acceptor role is filled by histidine 226. Lysine 230 serves as the catalytic Proton donor. 235 to 236 lines the (S)-2,3,4,5-tetrahydrodipicolinate pocket; that stretch reads GT.

This sequence belongs to the DapB family.

It is found in the plastid. Its subcellular location is the chloroplast. It catalyses the reaction (S)-2,3,4,5-tetrahydrodipicolinate + NAD(+) + H2O = (2S,4S)-4-hydroxy-2,3,4,5-tetrahydrodipicolinate + NADH + H(+). The enzyme catalyses (S)-2,3,4,5-tetrahydrodipicolinate + NADP(+) + H2O = (2S,4S)-4-hydroxy-2,3,4,5-tetrahydrodipicolinate + NADPH + H(+). The protein operates within amino-acid biosynthesis; L-lysine biosynthesis via DAP pathway; (S)-tetrahydrodipicolinate from L-aspartate: step 4/4. In terms of biological role, catalyzes the conversion of 4-hydroxy-tetrahydrodipicolinate (HTPA) to tetrahydrodipicolinate. The polypeptide is Probable 4-hydroxy-tetrahydrodipicolinate reductase 1, chloroplastic (DAPB1) (Oryza sativa subsp. japonica (Rice)).